A 464-amino-acid chain; its full sequence is Probable mannosyltransferase KTR4 (464 aa).

The Cytoplasmic portion of the chain corresponds to 1–11 (MRFLSKRILKP). Residues 12–32 (VLSVIILISIAVTVVLYFLTA) form a helical; Signal-anchor for type II membrane protein membrane-spanning segment. Residues 33-130 (NENYLQAVKD…NLVRSGDPLA (98 aa)) form a stem region region. Over 33–464 (NENYLQAVKD…SMSEEELEMY (432 aa)) the chain is Lumenal. Positions 131 to 464 (GKAKGTILSL…SMSEEELEMY (334 aa)) are catalytic. E352 functions as the Nucleophile in the catalytic mechanism.

Belongs to the glycosyltransferase 15 family.

It localises to the membrane. Possible glycosyltransferase that transfers an alpha-D-mannosyl residue from GDP-mannose into lipid-linked oligosaccharide, forming an alpha-(1-&gt;2)-D-mannosyl-D-mannose linkage. The chain is Probable mannosyltransferase KTR4 (KTR4) from Saccharomyces cerevisiae (strain ATCC 204508 / S288c) (Baker's yeast).